A 94-amino-acid polypeptide reads, in one-letter code: uncharacterized protein (94 aa).

Over residues 33–42 (INSLPTFTKP) the composition is skewed to polar residues. The disordered stretch occupies residues 33 to 57 (INSLPTFTKPNDSNNNVNKSSNDGV). The segment covering 43 to 57 (NDSNNNVNKSSNDGV) has biased composition (low complexity).

This is an uncharacterized protein from Dictyostelium discoideum (Social amoeba).